The chain runs to 42 residues: Ostricacin-4 (42 aa).

Intrachain disulfides connect C8-C36, C15-C30, and C20-C37.

It is found in the secreted. Has antibacterial activity against the Gram-positive bacterium S.aureus 1056 MRSA (MIC=11.48 ug/ml) and the Gram-negative bacterium E.coli O157:H7 (MIC=12.03 ug/ml). Does not have antifungal activity against the yeast C.albicans 3153A. The sequence is that of Ostricacin-4 from Struthio camelus (Common ostrich).